The sequence spans 466 residues: ATP synthase subunit beta (466 aa).

ATP is bound at residue 152–159; that stretch reads GGAGVGKT.

The protein belongs to the ATPase alpha/beta chains family. As to quaternary structure, F-type ATPases have 2 components, CF(1) - the catalytic core - and CF(0) - the membrane proton channel. CF(1) has five subunits: alpha(3), beta(3), gamma(1), delta(1), epsilon(1). CF(0) has three main subunits: a(1), b(2) and c(9-12). The alpha and beta chains form an alternating ring which encloses part of the gamma chain. CF(1) is attached to CF(0) by a central stalk formed by the gamma and epsilon chains, while a peripheral stalk is formed by the delta and b chains.

The protein localises to the cell inner membrane. It carries out the reaction ATP + H2O + 4 H(+)(in) = ADP + phosphate + 5 H(+)(out). In terms of biological role, produces ATP from ADP in the presence of a proton gradient across the membrane. The catalytic sites are hosted primarily by the beta subunits. The polypeptide is ATP synthase subunit beta (Helicobacter pylori (strain HPAG1)).